A 219-amino-acid chain; its full sequence is Probable nicotinate-nucleotide adenylyltransferase (219 aa).

It belongs to the NadD family.

The enzyme catalyses nicotinate beta-D-ribonucleotide + ATP + H(+) = deamido-NAD(+) + diphosphate. It functions in the pathway cofactor biosynthesis; NAD(+) biosynthesis; deamido-NAD(+) from nicotinate D-ribonucleotide: step 1/1. Functionally, catalyzes the reversible adenylation of nicotinate mononucleotide (NaMN) to nicotinic acid adenine dinucleotide (NaAD). The sequence is that of Probable nicotinate-nucleotide adenylyltransferase from Pseudoalteromonas atlantica (strain T6c / ATCC BAA-1087).